We begin with the raw amino-acid sequence, 334 residues long: N-acetyl-gamma-glutamyl-phosphate reductase (334 aa).

Cysteine 154 is a catalytic residue.

The protein belongs to the NAGSA dehydrogenase family. Type 1 subfamily.

The protein localises to the cytoplasm. The catalysed reaction is N-acetyl-L-glutamate 5-semialdehyde + phosphate + NADP(+) = N-acetyl-L-glutamyl 5-phosphate + NADPH + H(+). Its pathway is amino-acid biosynthesis; L-arginine biosynthesis; N(2)-acetyl-L-ornithine from L-glutamate: step 3/4. In terms of biological role, catalyzes the NADPH-dependent reduction of N-acetyl-5-glutamyl phosphate to yield N-acetyl-L-glutamate 5-semialdehyde. This Vibrio vulnificus (strain YJ016) protein is N-acetyl-gamma-glutamyl-phosphate reductase.